The following is a 120-amino-acid chain: Large ribosomal subunit protein eL8 (120 aa).

This sequence belongs to the eukaryotic ribosomal protein eL8 family. In terms of assembly, part of the 50S ribosomal subunit. Probably part of the RNase P complex.

It is found in the cytoplasm. Multifunctional RNA-binding protein that recognizes the K-turn motif in ribosomal RNA, the RNA component of RNase P, box H/ACA, box C/D and box C'/D' sRNAs. This is Large ribosomal subunit protein eL8 from Halorubrum lacusprofundi (strain ATCC 49239 / DSM 5036 / JCM 8891 / ACAM 34).